The primary structure comprises 214 residues: Oxaloacetate tautomerase fahd-1, mitochondrial (214 aa).

The Mg(2+) site is built by Glu65, Glu67, and Asp96.

The protein belongs to the FAH family. Requires Mg(2+) as cofactor. The cofactor is Mn(2+). As to expression, widely expressed.

It localises to the mitochondrion. The enzyme catalyses oxaloacetate = enol-oxaloacetate. Tautomerase that converts enol-oxaloacetate, a strong inhibitor of succinate dehydrogenase, to the physiological keto form of oxaloacetate. The protein is Oxaloacetate tautomerase fahd-1, mitochondrial of Caenorhabditis elegans.